The sequence spans 162 residues: ATP synthase subunit delta, mitochondrial (162 aa).

A mitochondrion-targeting transit peptide spans 1–24 (MFSVARTAIRGAARPAVRIARRGY).

F-type ATP synthases have 2 components, the catalytic core F(1) and the membrane-embedded component F(0), linked together by a central stalk and a peripheral stalk. The central stalk, also called rotor shaft, is often seen as part of F(1). The peripheral stalk is seen as part of F(0). F(0) contains the membrane channel next to the rotor. F-type ATP synthases form dimers but each monomer functions independently in ATP generation. The dimer consists of 17 different polypeptides: ATP1 (subunit alpha, 3 molecules per monomer, part of F(1)), ATP2 (subunit beta, 3 copies per monomer, part of F(1)), ATP3 (subunit gamma, part of the central stalk), ATP4 (subunit b, part of the peripheral stalk), ATP5/OSCP (subunit 5/OSCP, part of the peripheral stalk), ATP6 (subunit a, part of the peripheral stalk), ATP7 (subunit d, part of the peripheral stalk), ATP8 (subunit 8, part of the peripheral stalk), OLI1 (subunit c, part of the rotor, 10 molecules per monomer), ATP14 (subunit h, part of the peripheral stalk), ATP15 (subunit epsilon, part of the central stalk), ATP16 (subunit delta, part of the central stalk), ATP17 (subunit f, part of the peripheral stalk), ATP18 (subunit i/j, part of the peripheral stalk), ATP19 (subunit k, dimer-specific, at interface between monomers), ATP20 (subunit g, at interface between monomers), TIM11 (subunit e, at interface between monomers).

The protein resides in the mitochondrion inner membrane. In terms of biological role, mitochondrial membrane ATP synthase (F(1)F(0) ATP synthase or Complex V) produces ATP from ADP in the presence of a proton gradient across the membrane which is generated by electron transport complexes of the respiratory chain. F-type ATP synthases consist of two structural domains, F(1) - containing the extramembraneous catalytic core, and F(0) - containing the membrane proton channel, linked together by a central stalk and a peripheral stalk. During catalysis, ATP synthesis in the catalytic domain of F(1) is coupled via a rotary mechanism of the central stalk subunits to proton translocation. Part of the complex F(1) domain and the central stalk which is part of the complex rotary element. Rotation of the central stalk against the surrounding alpha/ATP1(3)beta/ATP2(3) subunits leads to hydrolysis of ATP in three separate catalytic sites on the beta/ATP2 subunits. The polypeptide is ATP synthase subunit delta, mitochondrial (Yarrowia lipolytica (strain CLIB 122 / E 150) (Yeast)).